A 127-amino-acid chain; its full sequence is Small ribosomal subunit protein bS6 (127 aa).

The interval 99 to 127 is disordered; it reads PSPMMKEEKSKSMMPGDAAPAAPAETAAA. Low complexity predominate over residues 110–127; sequence SMMPGDAAPAAPAETAAA.

Belongs to the bacterial ribosomal protein bS6 family.

Binds together with bS18 to 16S ribosomal RNA. The sequence is that of Small ribosomal subunit protein bS6 from Dechloromonas aromatica (strain RCB).